A 206-amino-acid polypeptide reads, in one-letter code: Cytidylate kinase (206 aa).

9–17 (GPAAAGKGT) is a binding site for ATP. Over residues 155–168 (LRERDRRDREREAA) the composition is skewed to basic and acidic residues. The segment at 155–174 (LRERDRRDREREAAPLRPAP) is disordered.

This sequence belongs to the cytidylate kinase family. Type 1 subfamily.

It is found in the cytoplasm. It carries out the reaction CMP + ATP = CDP + ADP. It catalyses the reaction dCMP + ATP = dCDP + ADP. This Cereibacter sphaeroides (strain KD131 / KCTC 12085) (Rhodobacter sphaeroides) protein is Cytidylate kinase.